Here is a 169-residue protein sequence, read N- to C-terminus: Lutropin/choriogonadotropin subunit beta (169 aa).

A signal peptide spans 1-20 (MEMLQGLLLWMLLSVGGVWA). Intrachain disulfides connect Cys29-Cys77, Cys43-Cys92, Cys46-Cys130, Cys54-Cys108, Cys58-Cys110, and Cys113-Cys120. Residue Asn33 is glycosylated (N-linked (GlcNAc...) asparagine). The interval 131–169 (APQASSSSKDPPSQPLTSTSTPTPGASNRSSHPLPIKTS) is disordered. Residues 145 to 154 (PLTSTSTPTP) are compositionally biased toward low complexity. Positions 155–169 (GASNRSSHPLPIKTS) are enriched in polar residues. N-linked (GlcNAc...) asparagine glycosylation occurs at Asn158.

The protein belongs to the glycoprotein hormones subunit beta family. As to quaternary structure, heterodimer of a common alpha chain and a unique beta chain which confers biological specificity to thyrotropin, lutropin, follitropin and gonadotropin.

It localises to the secreted. In terms of biological role, promotes spermatogenesis and ovulation by stimulating the testes and ovaries to synthesize steroids. In Equus quagga burchellii (Burchell's zebra), this protein is Lutropin/choriogonadotropin subunit beta (LHB).